A 158-amino-acid polypeptide reads, in one-letter code: Large ribosomal subunit protein uL13 (158 aa).

The interval 129-158 is disordered; sequence PEHGHHAQKPVALDFGAMNNKNGRGNNAGR. Residues 144–158 show a composition bias toward low complexity; the sequence is GAMNNKNGRGNNAGR.

This sequence belongs to the universal ribosomal protein uL13 family. As to quaternary structure, part of the 50S ribosomal subunit.

Functionally, this protein is one of the early assembly proteins of the 50S ribosomal subunit, although it is not seen to bind rRNA by itself. It is important during the early stages of 50S assembly. The sequence is that of Large ribosomal subunit protein uL13 from Anaplasma phagocytophilum (strain HZ).